A 181-amino-acid chain; its full sequence is Probable nicotinate-nucleotide adenylyltransferase (181 aa).

The protein belongs to the NadD family.

It catalyses the reaction nicotinate beta-D-ribonucleotide + ATP + H(+) = deamido-NAD(+) + diphosphate. The protein operates within cofactor biosynthesis; NAD(+) biosynthesis; deamido-NAD(+) from nicotinate D-ribonucleotide: step 1/1. Functionally, catalyzes the reversible adenylation of nicotinate mononucleotide (NaMN) to nicotinic acid adenine dinucleotide (NaAD). The polypeptide is Probable nicotinate-nucleotide adenylyltransferase (Campylobacter jejuni subsp. jejuni serotype O:23/36 (strain 81-176)).